Reading from the N-terminus, the 123-residue chain is Cysteine-rich DPF motif domain-containing protein 1 (123 aa).

The interval 102–123 (RQDLEKRKAPSKRTPSQPGSRT) is disordered. The span at 114–123 (RTPSQPGSRT) shows a compositional bias: polar residues.

Belongs to the CDPF1 family.

This is Cysteine-rich DPF motif domain-containing protein 1 (CDPF1) from Homo sapiens (Human).